The sequence spans 687 residues: DNA ligase (687 aa).

NAD(+) is bound by residues 34 to 38, 83 to 84, and Glu117; these read DAEYD and SL. Catalysis depends on Lys119, which acts as the N6-AMP-lysine intermediate. NAD(+)-binding residues include Arg140, Glu182, Lys298, and Lys322. Zn(2+) is bound by residues Cys416, Cys419, Cys434, and Cys439. In terms of domain architecture, BRCT spans 609–687; that stretch reads EARGPFAGKT…EEEFVRLLKE (79 aa).

It belongs to the NAD-dependent DNA ligase family. LigA subfamily. The cofactor is Mg(2+). It depends on Mn(2+) as a cofactor.

The catalysed reaction is NAD(+) + (deoxyribonucleotide)n-3'-hydroxyl + 5'-phospho-(deoxyribonucleotide)m = (deoxyribonucleotide)n+m + AMP + beta-nicotinamide D-nucleotide.. Its function is as follows. DNA ligase that catalyzes the formation of phosphodiester linkages between 5'-phosphoryl and 3'-hydroxyl groups in double-stranded DNA using NAD as a coenzyme and as the energy source for the reaction. It is essential for DNA replication and repair of damaged DNA. The polypeptide is DNA ligase (Anaeromyxobacter dehalogenans (strain 2CP-1 / ATCC BAA-258)).